We begin with the raw amino-acid sequence, 314 residues long: Hydroxyacyl-coenzyme A dehydrogenase, mitochondrial (314 aa).

Residues Met1–Met12 constitute a mitochondrion transit peptide. Residues Gly34–Gly39 and Asp57 each bind NAD(+). Residue Ser73 coordinates CoA. Lys75 carries the post-translational modification N6-acetyllysine. Lys80 provides a ligand contact to CoA. Lys80 bears the N6-succinyllysine mark. N6-acetyllysine; alternate is present on residues Lys81 and Lys87. 2 positions are modified to N6-succinyllysine; alternate: Lys81 and Lys87. Glu122 contributes to the NAD(+) binding site. Position 125 is an N6-acetyllysine (Lys125). Lys127 is a binding site for NAD(+). At Lys127 the chain carries N6-(2-hydroxyisobutyryl)lysine. At Lys136 the chain carries N6-acetyllysine; alternate. Lys136 carries the post-translational modification N6-succinyllysine; alternate. Positions 149 and 173 each coordinate NAD(+). Ser149 lines the CoA pocket. Lys179 is modified (N6-acetyllysine). N6-acetyllysine; alternate is present on residues Lys185, Lys192, and Lys202. An N6-succinyllysine; alternate mark is found at Lys185, Lys192, and Lys202. Residue Lys206 is modified to N6-succinyllysine. N6-acetyllysine; alternate occurs at positions 212 and 241. An N6-succinyllysine; alternate mark is found at Lys212 and Lys241. Lys305 lines the NAD(+) pocket. Position 312 is an N6-acetyllysine; alternate (Lys312). N6-succinyllysine; alternate is present on Lys312.

This sequence belongs to the 3-hydroxyacyl-CoA dehydrogenase family. As to quaternary structure, homodimer. Interacts with GLUD1; this interaction inhibits the activation of glutamate dehydrogenase 1 (GLUD1). In terms of processing, succinylation at Lys-81, adjacent to a coenzyme A binding site. Desuccinylated by SIRT5.

The protein localises to the mitochondrion matrix. It catalyses the reaction a (3S)-3-hydroxyacyl-CoA + NAD(+) = a 3-oxoacyl-CoA + NADH + H(+). The enzyme catalyses (3S)-3-hydroxybutanoyl-CoA + NAD(+) = acetoacetyl-CoA + NADH + H(+). It carries out the reaction (3S)-hydroxydecanoyl-CoA + NAD(+) = 3-oxodecanoyl-CoA + NADH + H(+). The catalysed reaction is (3S)-hydroxyhexadecanoyl-CoA + NAD(+) = 3-oxohexadecanoyl-CoA + NADH + H(+). It participates in lipid metabolism; fatty acid beta-oxidation. Its function is as follows. Mitochondrial fatty acid beta-oxidation enzyme that catalyzes the third step of the beta-oxidation cycle for medium and short-chain 3-hydroxy fatty acyl-CoAs (C4 to C10). Plays a role in the control of insulin secretion by inhibiting the activation of glutamate dehydrogenase 1 (GLUD1), an enzyme that has an important role in regulating amino acid-induced insulin secretion. Plays a role in the maintenance of normal spermatogenesis through the reduction of fatty acid accumulation in the testes. The sequence is that of Hydroxyacyl-coenzyme A dehydrogenase, mitochondrial (Hadh) from Rattus norvegicus (Rat).